The chain runs to 310 residues: tRNA dimethylallyltransferase (310 aa).

13–20 (GPTASGKT) is an ATP binding site. 15-20 (TASGKT) serves as a coordination point for substrate. Interaction with substrate tRNA stretches follow at residues 38-41 (DSAL), 162-166 (QRLSR), 243-248 (RCVGYR), and 276-283 (KRQITWLR).

The protein belongs to the IPP transferase family. As to quaternary structure, monomer. Requires Mg(2+) as cofactor.

It carries out the reaction adenosine(37) in tRNA + dimethylallyl diphosphate = N(6)-dimethylallyladenosine(37) in tRNA + diphosphate. In terms of biological role, catalyzes the transfer of a dimethylallyl group onto the adenine at position 37 in tRNAs that read codons beginning with uridine, leading to the formation of N6-(dimethylallyl)adenosine (i(6)A). This Vibrio campbellii (strain ATCC BAA-1116) protein is tRNA dimethylallyltransferase.